The chain runs to 1486 residues: MIERGKFRSLTLINWNGFFARTFDLDELVTTLSGGNGAGKSTTMAAFVTALIPDLTLLHFRNTTEAGATSGSRDKGLHGKLKAGVCYSMLDTINSRHQRVVVGVRLQQVAGRDRKVDIKPFAIQGLPMSVQPTQLVTETLNERQARVLPLNELKDKLEAMEGVQFKQFNSITDYHSLMFDLGIIARRLRSASDRSKFYRLIEASLYGGISSAITRSLRDYLLPENSGVRKAFQDMEAALRENRMTLEAIRVTQSDRDLFKHLISEATNYVAADYMRHANERRVHLDKALEFRRELHTSRQQLAAEQYKHVDMARELAEHNGAEGDLEADYQAASDHLNLVQTALRQQEKIERYEVDLDELQIRLEEQNEVVAEAIERQEENEARAEAAELEVDELKSQLADYQQALDVQQTRAIQYNQAIAALNRAKELCHLPDLTADSAAEWLETFQAKELEATEKMLSLEQKMSMAQTAHSQFEQAYQLVVAINGPLARNEAWDVARELLREGVDQRHLAEQVQPLRMRLSELEQRLREQQEAERLLADFCKRQGKNFDIDELEALHQELEARIASLSDSVSNAREERMALRQEQEQLQSRIQSLMQRAPVWLAAQNSLNQLSEQCGEEFSSSQDVTEYLQQLLEREREAIVERDEVGARKNAVDEEIERLSQPGGSEDQRLNALAERFGGVLLSEIYDDVSLEDAPYFSALYGPSRHAIVVPDLSQVTEHLEGLTDCPEDLYLIEGDPQSFDDSVFSVDELEKAVVVKIADRQWRYSRFPEVPLFGRAARESRIESLHAEREVLSERFATLSFDVQKTQRLHQAFSRFIGSHLAVAFESDPEAEIRQLNSRRVELERALSNHENDNQQQRIQFEQAKEGVTALNRILPRLNLLADDSLADRVDEIRERLDEAQEAARFVQQFGNQLAKLEPIVSVLQSDPEQFEQLKEDYAYSQQMQRDARQQAFALTEVVQRRAHFSYSDSAEMLSGNSDLNEKLRERLEQAEAERTRAREALRGHAAQLSQYNQVLASLKSSYDTKKELLNDLQRELQDIGVRADSGAEERARIRRDELHAQLSNNRSRRNQLEKALTFCEAEMDNLTRKLRKLERDYFEMREQVVTAKAGWCAVMRMVKDNGVERRLHRRELAYLSADDLRSMSDKALGALRLAVADNEHLRDVLRMSEDPKRPERKIQFFVAVYQHLRERIRQDIIRTDDPVEAIEQMEIELSRLTEELTSREQKLAISSRSVANIIRKTIQREQNRIRMLNQGLQNVSFGQVNSVRLNVNVRETHAMLLDVLSEQHEQHQDLFNSNRLTFSEALAKLYQRLNPQIDMGQRTPQTIGEELLDYRNYLEMEVEVNRGSDGWLRAESGALSTGEAIGTGMSILVMVVQSWEDESRRLRGKDISPCRLLFLDEAARLDARSIATLFELCERLQMQLIIAAPENISPEKGTTYKLVRKVFQNTEHVHVVGLRGFAPQLPETLLGRDEAPSQAS.

34–41 (GGNGAGKS) is an ATP binding site. Coiled coils occupy residues 326-418 (LEAD…QYNQ), 444-480 (LETF…QAYQ), and 509-603 (RHLA…RAPV). Positions 666 to 783 (PGGSEDQRLN…EVPLFGRAAR (118 aa)) are flexible hinge. Coiled coils occupy residues 835 to 923 (EAEI…AKLE), 977 to 1115 (EMLS…TAKA), and 1209 to 1266 (VEAI…QNVS).

It belongs to the SMC family. MukB subfamily. Homodimerization via its hinge domain. Binds to DNA via its C-terminal region. Interacts, and probably forms a ternary complex, with MukE and MukF via its C-terminal region. The complex formation is stimulated by calcium or magnesium. Interacts with tubulin-related protein FtsZ.

The protein resides in the cytoplasm. Its subcellular location is the nucleoid. Functionally, plays a central role in chromosome condensation, segregation and cell cycle progression. Functions as a homodimer, which is essential for chromosome partition. Involved in negative DNA supercoiling in vivo, and by this means organize and compact chromosomes. May achieve or facilitate chromosome segregation by condensation DNA from both sides of a centrally located replisome during cell division. This is Chromosome partition protein MukB from Shigella flexneri serotype 5b (strain 8401).